The primary structure comprises 182 residues: Acireductone dioxygenase (182 aa).

Residues His-100, His-102, Glu-106, and His-145 each contribute to the Fe(2+) site. Positions 100, 102, 106, and 145 each coordinate Ni(2+).

Belongs to the acireductone dioxygenase (ARD) family. Monomer. It depends on Fe(2+) as a cofactor. Ni(2+) is required as a cofactor.

The catalysed reaction is 1,2-dihydroxy-5-(methylsulfanyl)pent-1-en-3-one + O2 = 3-(methylsulfanyl)propanoate + CO + formate + 2 H(+). The enzyme catalyses 1,2-dihydroxy-5-(methylsulfanyl)pent-1-en-3-one + O2 = 4-methylsulfanyl-2-oxobutanoate + formate + 2 H(+). It participates in amino-acid biosynthesis; L-methionine biosynthesis via salvage pathway; L-methionine from S-methyl-5-thio-alpha-D-ribose 1-phosphate: step 5/6. Functionally, catalyzes 2 different reactions between oxygen and the acireductone 1,2-dihydroxy-3-keto-5-methylthiopentene (DHK-MTPene) depending upon the metal bound in the active site. Fe-containing acireductone dioxygenase (Fe-ARD) produces formate and 2-keto-4-methylthiobutyrate (KMTB), the alpha-ketoacid precursor of methionine in the methionine recycle pathway. Ni-containing acireductone dioxygenase (Ni-ARD) produces methylthiopropionate, carbon monoxide and formate, and does not lie on the methionine recycle pathway. The chain is Acireductone dioxygenase from Nostoc sp. (strain PCC 7120 / SAG 25.82 / UTEX 2576).